The following is a 292-amino-acid chain: Ribosomal RNA small subunit methyltransferase H (292 aa).

Residues Gly-32 to His-34, Asp-51, Leu-87, Asp-101, and Gln-108 contribute to the S-adenosyl-L-methionine site.

The protein belongs to the methyltransferase superfamily. RsmH family.

The protein localises to the cytoplasm. It carries out the reaction cytidine(1402) in 16S rRNA + S-adenosyl-L-methionine = N(4)-methylcytidine(1402) in 16S rRNA + S-adenosyl-L-homocysteine + H(+). Its function is as follows. Specifically methylates the N4 position of cytidine in position 1402 (C1402) of 16S rRNA. The sequence is that of Ribosomal RNA small subunit methyltransferase H from Pseudothermotoga lettingae (strain ATCC BAA-301 / DSM 14385 / NBRC 107922 / TMO) (Thermotoga lettingae).